Here is a 343-residue protein sequence, read N- to C-terminus: S-adenosylmethionine:tRNA ribosyltransferase-isomerase (343 aa).

The protein belongs to the QueA family. Monomer.

The protein localises to the cytoplasm. The enzyme catalyses 7-aminomethyl-7-carbaguanosine(34) in tRNA + S-adenosyl-L-methionine = epoxyqueuosine(34) in tRNA + adenine + L-methionine + 2 H(+). Its pathway is tRNA modification; tRNA-queuosine biosynthesis. In terms of biological role, transfers and isomerizes the ribose moiety from AdoMet to the 7-aminomethyl group of 7-deazaguanine (preQ1-tRNA) to give epoxyqueuosine (oQ-tRNA). This chain is S-adenosylmethionine:tRNA ribosyltransferase-isomerase, found in Hydrogenobaculum sp. (strain Y04AAS1).